The primary structure comprises 203 residues: Thymidylate kinase (203 aa).

14–21 (GGEGIGKS) lines the ATP pocket.

This sequence belongs to the thymidylate kinase family.

The catalysed reaction is dTMP + ATP = dTDP + ADP. In terms of biological role, phosphorylation of dTMP to form dTDP in both de novo and salvage pathways of dTTP synthesis. The sequence is that of Thymidylate kinase from Rickettsia conorii (strain ATCC VR-613 / Malish 7).